The following is a 135-amino-acid chain: Cytochrome b5, seed isoform (135 aa).

A Cytochrome b5 heme-binding domain is found at 5-81 (SKVFTLAEVS…LDEYYVGDID (77 aa)). The heme site is built by histidine 40 and histidine 64. Residues 107-127 (FIVKLLQFLVPLIILGVAFGV) form a helical membrane-spanning segment.

It belongs to the cytochrome b5 family. In terms of tissue distribution, specifically expressed in developing seeds.

It is found in the endoplasmic reticulum membrane. The protein localises to the microsome membrane. Cytochrome b5 is a membrane bound hemoprotein which function as an electron carrier for several membrane bound oxygenases. May play a key role in the modification by desaturation of fatty acids in the endoplasmic reticulum, which in the developing seed is utilized for membrane synthesis and in the developmentally regulated production of large amounts of storage lipids. The polypeptide is Cytochrome b5, seed isoform (Nicotiana tabacum (Common tobacco)).